Reading from the N-terminus, the 283-residue chain is MDIINDIATVQSRCLQARQAGQRIAFVPTMGYLHEGHLSLMREGRKRGDLLVASIFVNPTQFGPKEDLASYPRDLERDAELVREVGVDILFHPTPATMYPNGYKTYVHVEGLTKTLCGESRPGHFRGVTTVVCKLFNIVQPDIALFGRKDFQQLAVLRRMAADLNLPVEVVGLPTVREKDGLAMSSRNVFLSAEERKQALALVDALRQARVAAHHGEHHARRLVGLVRERIGREPDAQIDYIKICDGDTLEGVDRIDANSVLLMAVRIGQTRLIDNNYILEEV.

30–37 (MGYLHEGH) serves as a coordination point for ATP. The active-site Proton donor is H37. Q61 contributes to the (R)-pantoate binding site. A beta-alanine-binding site is contributed by Q61. 147–150 (GRKD) is a binding site for ATP. Q153 contacts (R)-pantoate. ATP is bound by residues V176 and 184-187 (MSSR).

This sequence belongs to the pantothenate synthetase family. As to quaternary structure, homodimer.

It is found in the cytoplasm. The catalysed reaction is (R)-pantoate + beta-alanine + ATP = (R)-pantothenate + AMP + diphosphate + H(+). It functions in the pathway cofactor biosynthesis; (R)-pantothenate biosynthesis; (R)-pantothenate from (R)-pantoate and beta-alanine: step 1/1. Functionally, catalyzes the condensation of pantoate with beta-alanine in an ATP-dependent reaction via a pantoyl-adenylate intermediate. In Syntrophotalea carbinolica (strain DSM 2380 / NBRC 103641 / GraBd1) (Pelobacter carbinolicus), this protein is Pantothenate synthetase.